A 114-amino-acid chain; its full sequence is ATP synthase subunit beta, mitochondrial (114 aa).

44–51 (GGAGVGKT) serves as a coordination point for ATP.

The protein belongs to the ATPase alpha/beta chains family. In terms of assembly, F-type ATPases have 2 components, CF(1) - the catalytic core - and CF(0) - the membrane proton channel. CF(1) has five subunits: alpha(3), beta(3), gamma(1), delta(1), epsilon(1). CF(0) has three main subunits: a, b and c.

Its subcellular location is the mitochondrion. It localises to the mitochondrion inner membrane. It catalyses the reaction ATP + H2O + 4 H(+)(in) = ADP + phosphate + 5 H(+)(out). Mitochondrial membrane ATP synthase (F(1)F(0) ATP synthase or Complex V) produces ATP from ADP in the presence of a proton gradient across the membrane which is generated by electron transport complexes of the respiratory chain. F-type ATPases consist of two structural domains, F(1) - containing the extramembraneous catalytic core, and F(0) - containing the membrane proton channel, linked together by a central stalk and a peripheral stalk. During catalysis, ATP synthesis in the catalytic domain of F(1) is coupled via a rotary mechanism of the central stalk subunits to proton translocation. Subunits alpha and beta form the catalytic core in F(1). Rotation of the central stalk against the surrounding alpha(3)beta(3) subunits leads to hydrolysis of ATP in three separate catalytic sites on the beta subunits. This is ATP synthase subunit beta, mitochondrial (atp2) from Penicillium glabrum (Penicillium frequentans).